The sequence spans 269 residues: Putative ankyrin repeat protein L23 (269 aa).

ANK repeat units lie at residues glutamate 118–serine 147, aspartate 148–alanine 177, asparagine 179–glutamate 207, glutamine 208–alanine 237, and aspartate 238–alanine 267.

The chain is Putative ankyrin repeat protein L23 from Acanthamoeba polyphaga (Amoeba).